We begin with the raw amino-acid sequence, 197 residues long: MTKQEKAENQEKPTEETVEETPKKETPFEPVMEADEVEETTEAQAPVEEADDKLAELQKKYDAMEDSFLRSQAEIKNIQMRNQKEQANLLKYDGQSLAKDVLPVLDNLERALAAEATDESLKKGVQMTYDHMKHALEDHGVKEIEAQGQAFDPTIHQAVQTVAVDGDQKADTVVQVFQKGYYLKDRVLRPAMVVVAQ.

Over residues 1-27 (MTKQEKAENQEKPTEETVEETPKKETP) the composition is skewed to basic and acidic residues. Positions 1 to 50 (MTKQEKAENQEKPTEETVEETPKKETPFEPVMEADEVEETTEAQAPVEEA) are disordered. Acidic residues predominate over residues 32-41 (MEADEVEETT).

It belongs to the GrpE family. Homodimer.

The protein resides in the cytoplasm. Participates actively in the response to hyperosmotic and heat shock by preventing the aggregation of stress-denatured proteins, in association with DnaK and GrpE. It is the nucleotide exchange factor for DnaK and may function as a thermosensor. Unfolded proteins bind initially to DnaJ; upon interaction with the DnaJ-bound protein, DnaK hydrolyzes its bound ATP, resulting in the formation of a stable complex. GrpE releases ADP from DnaK; ATP binding to DnaK triggers the release of the substrate protein, thus completing the reaction cycle. Several rounds of ATP-dependent interactions between DnaJ, DnaK and GrpE are required for fully efficient folding. This is Protein GrpE from Latilactobacillus sakei (Lactobacillus sakei).